Reading from the N-terminus, the 107-residue chain is U1-lycotoxin-Ls1v (107 aa).

The first 20 residues, Met1–Ser20, serve as a signal peptide directing secretion. A propeptide spanning residues Glu21 to Arg41 is cleaved from the precursor. Cystine bridges form between Cys44–Cys59, Cys51–Cys68, Cys58–Cys86, and Cys70–Cys84.

The protein belongs to the neurotoxin 19 (CSTX) family. 04 (U1-Lctx) subfamily. As to expression, expressed by the venom gland.

Its subcellular location is the secreted. This Lycosa singoriensis (Wolf spider) protein is U1-lycotoxin-Ls1v.